Reading from the N-terminus, the 82-residue chain is uncharacterized protein (82 aa).

Over residues 29–38 (TATKSTSSGS) the composition is skewed to low complexity. Residues 29 to 64 (TATKSTSSGSVPSFFTESTSTPLNQSKTNTSTLNKS) form a disordered region. The span at 39 to 50 (VPSFFTESTSTP) shows a compositional bias: polar residues. Residues 51–64 (LNQSKTNTSTLNKS) show a composition bias toward low complexity.

This is an uncharacterized protein from Dictyostelium discoideum (Social amoeba).